A 281-amino-acid chain; its full sequence is tRNA uridine(34) hydroxylase (281 aa).

In terms of domain architecture, Rhodanese spans 121–214; that stretch reads SQPDVLVIDT…YLEKTHNKSG (94 aa). Residue Cys174 is the Cysteine persulfide intermediate of the active site.

It belongs to the TrhO family.

It carries out the reaction uridine(34) in tRNA + AH2 + O2 = 5-hydroxyuridine(34) in tRNA + A + H2O. Functionally, catalyzes oxygen-dependent 5-hydroxyuridine (ho5U) modification at position 34 in tRNAs. This chain is tRNA uridine(34) hydroxylase, found in Wolbachia pipientis subsp. Culex pipiens (strain wPip).